A 564-amino-acid polypeptide reads, in one-letter code: Glutamate--tRNA ligase (564 aa).

Positions 107–117 match the 'HIGH' region motif; it reads PNPNGPPTLGS.

The protein belongs to the class-I aminoacyl-tRNA synthetase family. Glutamate--tRNA ligase type 2 subfamily.

The protein localises to the cytoplasm. The catalysed reaction is tRNA(Glu) + L-glutamate + ATP = L-glutamyl-tRNA(Glu) + AMP + diphosphate. Catalyzes the attachment of glutamate to tRNA(Glu) in a two-step reaction: glutamate is first activated by ATP to form Glu-AMP and then transferred to the acceptor end of tRNA(Glu). This chain is Glutamate--tRNA ligase, found in Methanothrix thermoacetophila (strain DSM 6194 / JCM 14653 / NBRC 101360 / PT) (Methanosaeta thermophila).